The sequence spans 246 residues: Pyridoxine 5'-phosphate synthase (246 aa).

Asparagine 7 contributes to the 3-amino-2-oxopropyl phosphate binding site. 9–10 (DH) is a 1-deoxy-D-xylulose 5-phosphate binding site. 3-amino-2-oxopropyl phosphate is bound at residue arginine 18. Histidine 43 serves as the catalytic Proton acceptor. 2 residues coordinate 1-deoxy-D-xylulose 5-phosphate: arginine 45 and histidine 50. The active-site Proton acceptor is glutamate 70. Residue threonine 100 coordinates 1-deoxy-D-xylulose 5-phosphate. The Proton donor role is filled by histidine 190. Residues glycine 191 and 212–213 (GH) each bind 3-amino-2-oxopropyl phosphate.

This sequence belongs to the PNP synthase family. As to quaternary structure, homooctamer; tetramer of dimers.

The protein localises to the cytoplasm. The enzyme catalyses 3-amino-2-oxopropyl phosphate + 1-deoxy-D-xylulose 5-phosphate = pyridoxine 5'-phosphate + phosphate + 2 H2O + H(+). The protein operates within cofactor biosynthesis; pyridoxine 5'-phosphate biosynthesis; pyridoxine 5'-phosphate from D-erythrose 4-phosphate: step 5/5. Functionally, catalyzes the complicated ring closure reaction between the two acyclic compounds 1-deoxy-D-xylulose-5-phosphate (DXP) and 3-amino-2-oxopropyl phosphate (1-amino-acetone-3-phosphate or AAP) to form pyridoxine 5'-phosphate (PNP) and inorganic phosphate. The sequence is that of Pyridoxine 5'-phosphate synthase from Bordetella petrii (strain ATCC BAA-461 / DSM 12804 / CCUG 43448).